The sequence spans 115 residues: Ribonuclease P protein component 4 (115 aa).

Zn(2+) contacts are provided by cysteine 66, cysteine 69, cysteine 96, and cysteine 99.

It belongs to the eukaryotic/archaeal RNase P protein component 4 family. Consists of a catalytic RNA component and at least 4-5 protein subunits. The cofactor is Zn(2+).

The protein localises to the cytoplasm. It catalyses the reaction Endonucleolytic cleavage of RNA, removing 5'-extranucleotides from tRNA precursor.. Its function is as follows. Part of ribonuclease P, a protein complex that generates mature tRNA molecules by cleaving their 5'-ends. This Hyperthermus butylicus (strain DSM 5456 / JCM 9403 / PLM1-5) protein is Ribonuclease P protein component 4.